Here is a 1149-residue protein sequence, read N- to C-terminus: MSDCWCFIFCKEHVRSNPLSPQHDGASREEADHQVDVSDGIRLVPDKAEATAATASDEIMHQDIVPLCAADIQEQLKKRFAYLSGGRGQDGSPVITFPDYPAFSEIPDKEFQNVMTYLTSIPSLQDAGIGFILVIDRRQDKWTSVKASVLRIAASFPANLQLVLVLRPTGFFQRTLSDIAFKFNRDEFKMKVPVMMLSSVPELHGYIDKSQLTEDLGGTLDYCHSRWLCHRTAIESFALMVKQTAQMLQAFGTELAETELPNDVQSTSLVLSAHTEKKAKVKEDLQLALKEGNSILESLREPLAESAAHSVNQDQLDNQATVQRLLAQLNETEAAFDEFWAKHQQKLEQCLQLRHFEQGFREVKTTLDSMSQKIAAFTDVGNSLAHVQHLLKDLTAFEEKSSVAVDKARALSLEGQQLIENRHYAVDSIHPKCEELQHLCDHFASEVTRRRGLLSKSLELHSLLETSMKWSDEGIFLLASQPVDKCQSQDGAEAALQEIEKFLETGAENKIQELNEIYKEYECILNQDLLEHVQKVFQKQESTEEMFHRRQASLKKLAAKQTRPVQPVAPRPEALTKSPSPSPGSWRSSENSSSEGNALRRGPYRRAKSEMSEPRQGRTSSTGEEEESLAILRRHVMNELLDTERAYVEELLCVLEGYAAEMDNPLMAHLISTGLQNKKNILFGNMEEIYHFHNRNIPAGLESCIDCPELVGRCFLERMEEFQIYEKYCQNKPRSESLWRQCSDCPFFQECQKKLDHKLSLDSYLLKPVQRITKYQLLLKEMLKYSKHCEGAEDLQEALSSILGILKAVNDSMHLIAITGYDGNLGDLGKLLMQGSFSVWTDHKKGHTKVKELARFKPMQRHLFLHEKAVLFCKKREENGEGYEKAPSYSYKQSLNMTAVGITENVKGDTKKFEIWYNAREEVYIIQAPTPEIKAAWVNEIRKVLTSQLQACREASQHRALEQSHSLPLPTPSSTSPTKGNTRNVKKLEDRKTDPLSLEGYVSSSLPKPPEKGKGWSKTSHSLEAPEEDGGWSSAEELINSSDAEEDGGVGPKKLVPGKYTVVMDDEKGGPDTLAMRSGDMVEVVEEGAEGLWYVRDLTSSKEGWVPASSLSTLLGKSSSAQCLSSSGKIHCARQLCPEPAEILSPEPV.

The region spanning 52–224 (AATASDEIMH…DLGGTLDYCH (173 aa)) is the CRAL-TRIO domain. Residues 351-456 (LQLRHFEQGF…VTRRRGLLSK (106 aa)) form a Spectrin repeat. Serine 457, serine 462, serine 471, and serine 480 each carry phosphoserine. Residues 503-529 (LETGAENKIQELNEIYKEYECILNQDL) are a coiled coil. The tract at residues 555–627 (KKLAAKQTRP…RTSSTGEEEE (73 aa)) is disordered. Low complexity predominate over residues 583–594 (PGSWRSSENSSS). Positions 607 to 616 (AKSEMSEPRQ) are enriched in basic and acidic residues. Serine 621 is subject to Phosphoserine. Threonine 622 carries the phosphothreonine modification. The DH domain maps to 632–812 (LRRHVMNELL…LGILKAVNDS (181 aa)). The PH domain occupies 841-950 (TDHKKGHTKV…IRKVLTSQLQ (110 aa)). A disordered region spans residues 956–1033 (SQHRALEQSH…EAPEEDGGWS (78 aa)). Positions 966 to 978 (SLPLPTPSSTSPT) are enriched in low complexity. Phosphoserine occurs at positions 1033, 1034, 1041, and 1042. Residues 1055–1116 (LVPGKYTVVM…PASSLSTLLG (62 aa)) form the SH3 domain.

Belongs to the MCF2 family. Interacts with GTP-bound RAC1. Interacts with CDC42. Interacts with RHOA. Interacts with CCPG1, which results in specific inhibition of its exchange activity toward RHOA, but does not affect its activity on CDC42. In terms of tissue distribution, expressed at low levels in several hemopoietic cell lines and in thymus and spleen, and at higher levels in other tissues, particularly in brain.

It is found in the cytoplasm. It localises to the cell membrane. Its function is as follows. Guanine nucleotide exchange factor that catalyzes guanine nucleotide exchange on RHOA and CDC42, and thereby contributes to the regulation of RHOA and CDC42 signaling pathways. Seems to lack activity with RAC1. Becomes activated and highly tumorigenic by truncation of the N-terminus. This Mus musculus (Mouse) protein is Guanine nucleotide exchange factor DBS (Mcf2l).